Consider the following 446-residue polypeptide: Na(+)-translocating NADH-quinone reductase subunit A (446 aa).

The protein belongs to the NqrA family. Composed of six subunits; NqrA, NqrB, NqrC, NqrD, NqrE and NqrF.

It carries out the reaction a ubiquinone + n Na(+)(in) + NADH + H(+) = a ubiquinol + n Na(+)(out) + NAD(+). Functionally, NQR complex catalyzes the reduction of ubiquinone-1 to ubiquinol by two successive reactions, coupled with the transport of Na(+) ions from the cytoplasm to the periplasm. NqrA to NqrE are probably involved in the second step, the conversion of ubisemiquinone to ubiquinol. The polypeptide is Na(+)-translocating NADH-quinone reductase subunit A (Vibrio anguillarum (Listonella anguillarum)).